Here is a 545-residue protein sequence, read N- to C-terminus: Glucans biosynthesis protein G (545 aa).

The first 34 residues, 1–34, serve as a signal peptide directing secretion; it reads MVSLLRCQSFKPSSSLICSLALSAAFALSSSAFA. Positions 38 to 60 are disordered; that stretch reads KPAENKPATPVVSPPKATAQPAN.

The protein belongs to the OpgD/OpgG family.

It is found in the periplasm. It functions in the pathway glycan metabolism; osmoregulated periplasmic glucan (OPG) biosynthesis. Its function is as follows. Involved in the biosynthesis of osmoregulated periplasmic glucans (OPGs). This chain is Glucans biosynthesis protein G, found in Shewanella sp. (strain MR-4).